The following is a 208-amino-acid chain: Holliday junction branch migration complex subunit RuvA (208 aa).

The domain I stretch occupies residues 1 to 67 (MIGWLHGTIG…EDGQQLYGFE (67 aa)). The segment at 68 to 146 (TKADRNLFRL…ERWQQQGGST (79 aa)) is domain II. The flexible linker stretch occupies residues 147-157 (PLRLVEPVAES). Residues 157–208 (SRELRATLEALGYGPEEVSAAVAQAGSQGLDPEQPMEEWLRHCLAWLSRQAG) form a domain III region.

This sequence belongs to the RuvA family. Homotetramer. Forms an RuvA(8)-RuvB(12)-Holliday junction (HJ) complex. HJ DNA is sandwiched between 2 RuvA tetramers; dsDNA enters through RuvA and exits via RuvB. An RuvB hexamer assembles on each DNA strand where it exits the tetramer. Each RuvB hexamer is contacted by two RuvA subunits (via domain III) on 2 adjacent RuvB subunits; this complex drives branch migration. In the full resolvosome a probable DNA-RuvA(4)-RuvB(12)-RuvC(2) complex forms which resolves the HJ.

The protein resides in the cytoplasm. Functionally, the RuvA-RuvB-RuvC complex processes Holliday junction (HJ) DNA during genetic recombination and DNA repair, while the RuvA-RuvB complex plays an important role in the rescue of blocked DNA replication forks via replication fork reversal (RFR). RuvA specifically binds to HJ cruciform DNA, conferring on it an open structure. The RuvB hexamer acts as an ATP-dependent pump, pulling dsDNA into and through the RuvAB complex. HJ branch migration allows RuvC to scan DNA until it finds its consensus sequence, where it cleaves and resolves the cruciform DNA. The sequence is that of Holliday junction branch migration complex subunit RuvA from Synechococcus sp. (strain RCC307).